The primary structure comprises 104 residues: MITMDCLREVGDDLLVNIEVSPASGKFGIPSYNEWRKRIEVKIHSPPQKGKANREIIKEFSETFGRDVEIVSGQKSRQKTIRIQGMGRDLFLKLVSEKFGLEIP.

The protein belongs to the UPF0235 family.

This Methanothermobacter thermautotrophicus (strain ATCC 29096 / DSM 1053 / JCM 10044 / NBRC 100330 / Delta H) (Methanobacterium thermoautotrophicum) protein is UPF0235 protein MTH_637.